The following is a 623-amino-acid chain: Glutathione import ATP-binding protein GsiA (623 aa).

2 ABC transporter domains span residues 15 to 269 (VENL…RALL) and 314 to 564 (LRVR…RKLL). Residues 49–56 (GESGSGKS) and 357–364 (GESGSGKS) each bind ATP.

It belongs to the ABC transporter superfamily. Glutathione importer (TC 3.A.1.5.11) family. The complex is composed of two ATP-binding proteins (GsiA), two transmembrane proteins (GsiC and GsiD) and a solute-binding protein (GsiB).

Its subcellular location is the cell inner membrane. It carries out the reaction glutathione(out) + ATP + H2O = glutathione(in) + ADP + phosphate + H(+). Functionally, part of the ABC transporter complex GsiABCD involved in glutathione import. Responsible for energy coupling to the transport system. This chain is Glutathione import ATP-binding protein GsiA, found in Shigella boydii serotype 4 (strain Sb227).